Reading from the N-terminus, the 1431-residue chain is Zinc finger protein 687b (1431 aa).

Disordered regions lie at residues 24-481 (KEAI…RPLK) and 504-538 (KGGA…TTAG). Residues 61-73 (SPSPSTDSQSDPS) show a composition bias toward low complexity. Polar residues predominate over residues 103–122 (GFVSSGGSVHMSQSRGQPNG). Composition is skewed to low complexity over residues 174–188 (MQLL…EMNL), 196–209 (APAN…AASP), and 217–248 (LLST…ASSP). Polar residues predominate over residues 249–267 (LATSLTEPFNGTPRLSSSA). Positions 311–324 (SQSPSIPPSTSISP) are enriched in low complexity. The segment covering 342-359 (RAQQNWLSTAAQTGNGKS) has biased composition (polar residues). Positions 361–377 (PQEERNPEHVIEERDSP) are enriched in basic and acidic residues. Residues 385-410 (PKSSMPTSAVTKRSCSPAAASSPSAA) show a composition bias toward low complexity. Over residues 438–449 (DGGKGDTDKIEV) the composition is skewed to basic and acidic residues. Over residues 519 to 528 (QTGGRAGPVK) the composition is skewed to gly residues. A C2H2-type 1; degenerate zinc finger spans residues 674–692 (YRCLECGDSFALERSLARH). The disordered stretch occupies residues 754–816 (TTPIGMLSPS…GPQSPQALMP (63 aa)). Low complexity predominate over residues 760–775 (LSPSLSSPPLTSSTTP). Polar residues predominate over residues 781–802 (APSTSSPLKDSPSPGTASTQPS). The C2H2-type 2; degenerate zinc-finger motif lies at 830–853 (FKCPECQAQFLSKAELVTHFQQIR). 4 consecutive C2H2-type zinc fingers follow at residues 919–942 (YRCS…QTAH), 947–970 (HKCP…TSQH), 982–1004 (YKCV…FDTH), and 1013–1036 (FKCP…KTAH). The interval 1041–1120 (VKAETPPTTS…QVSSPESGNM (80 aa)) is disordered. Residues 1043–1057 (AETPPTTSSPVSAPA) show a composition bias toward low complexity. Over residues 1058–1075 (GNSTSKPKPATENNSDEL) the composition is skewed to polar residues. Positions 1080 to 1111 (GEEEEEGEDEEGEQEGEEREDEEEEENEEEEQ) are enriched in acidic residues. The C2H2-type 7 zinc finger occupies 1122–1145 (WRCKECKKRFPEREDYIDHMKNEH). The C2H2-type 8; degenerate zinc finger occupies 1205-1227 (WHCSEGKRTFSSRLILEKHIRVR). The tract at residues 1225–1310 (RVRHGIRSRQ…EEEDGTFRCT (86 aa)) is disordered. 2 C2H2-type zinc fingers span residues 1307-1329 (FRCT…IPVH) and 1337-1360 (QQCL…FITH). The tract at residues 1362 to 1392 (LRQGQHDRNASPGASPQYGSPSSPKAGEDGD) is disordered. The span at 1373-1384 (PGASPQYGSPSS) shows a compositional bias: polar residues. A C2H2-type 11 zinc finger spans residues 1395–1425 (VSCRVCGRRFDKASDLNTHFRTHGMAFITAH).

Belongs to the krueppel C2H2-type zinc-finger protein family. As to expression, widely expressed with highest levels in eye, spleen and ovary.

It is found in the nucleus. Its function is as follows. May be involved in transcriptional regulation. The sequence is that of Zinc finger protein 687b (znf687b) from Danio rerio (Zebrafish).